The primary structure comprises 128 residues: Fluoride-specific ion channel FluC 2 (128 aa).

4 helical membrane passes run 13–35 (ALVA…AIAG), 40–59 (LAAN…EAAA), 71–93 (LLGT…TAGL), and 97–119 (WMAA…GRAI).

Belongs to the fluoride channel Fluc/FEX (TC 1.A.43) family.

The protein resides in the cell membrane. It carries out the reaction fluoride(in) = fluoride(out). Functionally, fluoride-specific ion channel. Important for reducing fluoride concentration in the cell, thus reducing its toxicity. In Halobacterium salinarum (strain ATCC 700922 / JCM 11081 / NRC-1) (Halobacterium halobium), this protein is Fluoride-specific ion channel FluC 2.